The primary structure comprises 132 residues: Histone H2A (132 aa).

Basic residues predominate over residues 1 to 13; sequence MSAKGKTGRKKAS. The interval 1–21 is disordered; sequence MSAKGKTGRKKASKGTSNSAK.

The protein belongs to the histone H2A family. In terms of assembly, the nucleosome is a histone octamer containing two molecules each of H2A, H2B, H3 and H4 assembled in one H3-H4 heterotetramer and two H2A-H2B heterodimers. The octamer wraps approximately 147 bp of DNA.

The protein resides in the nucleus. It is found in the chromosome. In terms of biological role, core component of nucleosome. Nucleosomes wrap and compact DNA into chromatin, limiting DNA accessibility to the cellular machineries which require DNA as a template. Histones thereby play a central role in transcription regulation, DNA repair, DNA replication and chromosomal stability. DNA accessibility is regulated via a complex set of post-translational modifications of histones, also called histone code, and nucleosome remodeling. The chain is Histone H2A from Plasmodium falciparum.